A 571-amino-acid polypeptide reads, in one-letter code: MSYDQAVLNRIWSETILTELHRFGVKHVCIAPGSRSTPLTLEAAEQPNFSIHTHFDERGLGFMALGLAKASQEPVAVIVTSGTAVANLLPAVAEAKLTGEKLVLLTADRPVELVGCGANQAINQLGIFSQHVSANLNLPSPSLNTPLNWLLTSVDEVMFNQQLHGSAVHINCAFPEPLYSDGEKSAYQSYLSSVEAWRKGGQTYTQRFVSPSFRDIPFCADRKGVVVIGSLSAEHAQEAKAFAQQMGWPVLADPQSGVSSDWSHYDLWLQQPKLASQLDECDLVLQFGSRIISKRLNQWINKQVSQSQQGRDVQYWFISPSLSRDNQTHLPQLHWVASPKSWVERVDVKSSSTQGWADGLLTDIAHVRAHISDEFLFSSASTLNEIALAADIEERTQSVDVFLGNSLFVRLVDMFGRLNTEVFTNRGASGIDGLFATASGVQRSRGKPLLMYIGDTSALYDLNSLALFSRNDLPSVLVVTNNDGGAIFDMLPVPQEHRTAYYQMPHGYQFEHAAKQFGLKYEKPTTLQMYQAMVADHLSSGQGTMLVEVQTPPSQAAELIKAFNKSLHASL.

The protein belongs to the TPP enzyme family. MenD subfamily. In terms of assembly, homodimer. It depends on Mg(2+) as a cofactor. Requires Mn(2+) as cofactor. Thiamine diphosphate serves as cofactor.

The catalysed reaction is isochorismate + 2-oxoglutarate + H(+) = 5-enolpyruvoyl-6-hydroxy-2-succinyl-cyclohex-3-ene-1-carboxylate + CO2. The protein operates within quinol/quinone metabolism; 1,4-dihydroxy-2-naphthoate biosynthesis; 1,4-dihydroxy-2-naphthoate from chorismate: step 2/7. It participates in quinol/quinone metabolism; menaquinone biosynthesis. Functionally, catalyzes the thiamine diphosphate-dependent decarboxylation of 2-oxoglutarate and the subsequent addition of the resulting succinic semialdehyde-thiamine pyrophosphate anion to isochorismate to yield 2-succinyl-5-enolpyruvyl-6-hydroxy-3-cyclohexene-1-carboxylate (SEPHCHC). The polypeptide is 2-succinyl-5-enolpyruvyl-6-hydroxy-3-cyclohexene-1-carboxylate synthase (Vibrio parahaemolyticus serotype O3:K6 (strain RIMD 2210633)).